We begin with the raw amino-acid sequence, 177 residues long: RNA silencing suppressor (177 aa).

Homooctamer. The eight monomers assemble into a closed ring that binds RNA.

It localises to the host cytoplasm. Its function is as follows. Acts as a suppressor of RNA-mediated gene silencing, also known as post-transcriptional gene silencing (PTGS), a mechanism of plant viral defense that limits the accumulation of viral RNAs. Binds to ssRNAs and dsRNAs in vitro. Also functions as a replication enhancer. This Beta vulgaris (Sugar beet) protein is RNA silencing suppressor.